A 494-amino-acid chain; its full sequence is Cytochrome P450 2A3 (494 aa).

At S131 the chain carries Phosphoserine. An N6-acetyllysine modification is found at K379. C439 provides a ligand contact to heme.

This sequence belongs to the cytochrome P450 family. Heme is required as a cofactor. Lung.

The protein localises to the endoplasmic reticulum membrane. The protein resides in the microsome membrane. The catalysed reaction is an organic molecule + reduced [NADPH--hemoprotein reductase] + O2 = an alcohol + oxidized [NADPH--hemoprotein reductase] + H2O + H(+). In terms of biological role, cytochromes P450 are a group of heme-thiolate monooxygenases. In liver microsomes, this enzyme is involved in an NADPH-dependent electron transport pathway. It oxidizes a variety of structurally unrelated compounds, including steroids, fatty acids, and xenobiotics. In Rattus norvegicus (Rat), this protein is Cytochrome P450 2A3 (Cyp2a3).